Here is a 258-residue protein sequence, read N- to C-terminus: Hydroxyethylthiazole kinase (258 aa).

Position 37 (methionine 37) interacts with substrate. ATP is bound by residues arginine 112 and threonine 158. Alanine 185 lines the substrate pocket.

The protein belongs to the Thz kinase family. The cofactor is Mg(2+).

The catalysed reaction is 5-(2-hydroxyethyl)-4-methylthiazole + ATP = 4-methyl-5-(2-phosphooxyethyl)-thiazole + ADP + H(+). It participates in cofactor biosynthesis; thiamine diphosphate biosynthesis; 4-methyl-5-(2-phosphoethyl)-thiazole from 5-(2-hydroxyethyl)-4-methylthiazole: step 1/1. Functionally, catalyzes the phosphorylation of the hydroxyl group of 4-methyl-5-beta-hydroxyethylthiazole (THZ). The protein is Hydroxyethylthiazole kinase of Rhizobium etli (strain CIAT 652).